The chain runs to 301 residues: Homoserine O-acetyltransferase (301 aa).

The active-site Acyl-thioester intermediate is cysteine 142. The substrate site is built by lysine 163 and serine 192. Histidine 235 serves as the catalytic Proton acceptor. Residue glutamate 237 is part of the active site. Arginine 249 contacts substrate.

It belongs to the MetA family.

The protein localises to the cytoplasm. The enzyme catalyses L-homoserine + acetyl-CoA = O-acetyl-L-homoserine + CoA. Its pathway is amino-acid biosynthesis; L-methionine biosynthesis via de novo pathway; O-acetyl-L-homoserine from L-homoserine: step 1/1. In terms of biological role, transfers an acetyl group from acetyl-CoA to L-homoserine, forming acetyl-L-homoserine. This is Homoserine O-acetyltransferase from Clostridium acetobutylicum (strain ATCC 824 / DSM 792 / JCM 1419 / IAM 19013 / LMG 5710 / NBRC 13948 / NRRL B-527 / VKM B-1787 / 2291 / W).